Here is a 348-residue protein sequence, read N- to C-terminus: MSALTPASEVILRHSDEFLSRRVLFAGDLQDTLPAQFEAASVRVHCNQYHHWQQMAKPLGDNAQYSLVADAELVADSDTLIYYWPKSKQEAEFQLCNLLSLLPVGAEIFVVGENRSGVRSAETVLSDFVELVKIDSARRCGLYHGRIDKQASFTLDDWWDEYVTEGVTVKTLPGIFSRDGLDPGSRLLLSTFEPHMKGKVLDIACGAGVLASVLAKQSPKIRLTLSDVSAAAVESSNATLAANALEGSVIASNVYSDIDGRFDMIVSNPPFHDGLQTSLQAVEMLIRGAVTHLPIGGQLRIVANAFLPYPALLDAAFGSHEVLAQTGRFKVYQATVGRPPRTGKGRRR.

It belongs to the methyltransferase superfamily. RsmC family. Monomer.

The protein resides in the cytoplasm. It catalyses the reaction guanosine(1207) in 16S rRNA + S-adenosyl-L-methionine = N(2)-methylguanosine(1207) in 16S rRNA + S-adenosyl-L-homocysteine + H(+). In terms of biological role, specifically methylates the guanine in position 1207 of 16S rRNA in the 30S particle. The protein is Ribosomal RNA small subunit methyltransferase C of Pectobacterium atrosepticum (strain SCRI 1043 / ATCC BAA-672) (Erwinia carotovora subsp. atroseptica).